Reading from the N-terminus, the 51-residue chain is Small ribosomal subunit protein uS14 (51 aa).

Cys-16, Cys-19, Cys-34, and Cys-37 together coordinate Zn(2+).

The protein belongs to the universal ribosomal protein uS14 family. Zinc-binding uS14 subfamily. In terms of assembly, part of the 30S ribosomal subunit. Zn(2+) serves as cofactor.

In terms of biological role, binds 16S rRNA, required for the assembly of 30S particles. This is Small ribosomal subunit protein uS14 from Archaeoglobus fulgidus (strain ATCC 49558 / DSM 4304 / JCM 9628 / NBRC 100126 / VC-16).